Here is a 129-residue protein sequence, read N- to C-terminus: Large ribosomal subunit protein bL20 (129 aa).

It belongs to the bacterial ribosomal protein bL20 family.

Binds directly to 23S ribosomal RNA and is necessary for the in vitro assembly process of the 50S ribosomal subunit. It is not involved in the protein synthesizing functions of that subunit. In Mycolicibacterium smegmatis (strain ATCC 700084 / mc(2)155) (Mycobacterium smegmatis), this protein is Large ribosomal subunit protein bL20.